We begin with the raw amino-acid sequence, 258 residues long: Proteasome subunit alpha type-3 (258 aa).

Glycyl lysine isopeptide (Lys-Gly) (interchain with G-Cter in ubiquitin) cross-links involve residues Lys100, Lys199, and Lys231.

Belongs to the peptidase T1A family. The 26S proteasome consists of a 20S proteasome core and two 19S regulatory subunits. The 20S proteasome core is composed of 28 subunits that are arranged in four stacked rings, resulting in a barrel-shaped structure. The two end rings are each formed by seven alpha subunits, and the two central rings are each formed by seven beta subunits. The catalytic chamber with the active sites is on the inside of the barrel.

The protein resides in the cytoplasm. It is found in the nucleus. The proteasome degrades poly-ubiquitinated proteins in the cytoplasm and in the nucleus. It is essential for the regulated turnover of proteins and for the removal of misfolded proteins. The proteasome is a multicatalytic proteinase complex that is characterized by its ability to cleave peptides with Arg, Phe, Tyr, Leu, and Glu adjacent to the leaving group at neutral or slightly basic pH. It has an ATP-dependent proteolytic activity. The polypeptide is Proteasome subunit alpha type-3 (PRE9) (Saccharomyces cerevisiae (strain ATCC 204508 / S288c) (Baker's yeast)).